A 3018-amino-acid chain; its full sequence is Genome polyprotein (3018 aa).

N-acetylserine; by host is present on S2. The interaction with STAT1 stretch occupies residues 2–23 (STLPKPQRKTKRNTNRRPMDVK). Residues 2–58 (STLPKPQRKTKRNTNRRPMDVKFPGGGQIVGGVYLLPRKGPRLGVRATRKTSERSQP) are interaction with EIF2AK2/PKR. The tract at residues 2–59 (STLPKPQRKTKRNTNRRPMDVKFPGGGQIVGGVYLLPRKGPRLGVRATRKTSERSQPR) is interaction with DDX3X. The interval 2-75 (STLPKPQRKT…PKARQPQGRH (74 aa)) is disordered. Residues 2–168 (STLPKPQRKT…EDGINYATGN (167 aa)) lie on the Cytoplasmic side of the membrane. Short sequence motifs (nuclear localization signal) lie at residues 5–13 (PKPQRKTKR) and 38–43 (PRKGPR). A compositionally biased stretch (basic residues) spans 7–16 (PQRKTKRNTN). S53 carries the phosphoserine; by host modification. 2 consecutive short sequence motifs (nuclear localization signal) follow at residues 58–64 (PRGRRQP) and 66–71 (PKARQP). S99 and S116 each carry phosphoserine; by host. Residues 112–152 (PRRRSRNLGKVIDTLTCGFADLMWYIPVVGAPLGGVAAALA) are important for endoplasmic reticulum and mitochondrial localization. The interval 122-173 (VIDTLTCGFADLMWYIPVVGAPLGGVAAALAHGVRAIEDGINYATGNLPGCS) is interaction with APOA2. The interval 164–167 (YATG) is important for lipid droplets localization. The helical transmembrane segment at 169 to 189 (LPGCSFSIFLLALLSCLTTPA) threads the bilayer. Positions 178-191 (LLALLSCLTTPASA) are cleaved as a propeptide — ER anchor for the core protein, removed in mature form by host signal peptidase. The Lumenal segment spans residues 190-358 (SALTYGNSSG…FGGHWGILLA (169 aa)). N-linked (GlcNAc...) asparagine; by host glycosylation is found at N196, N209, N234, and N250. The segment at 265-296 (LAGAAVVCSSLYIGDLCGSLFLAGQLFAFQPR) is important for fusion. A glycan (N-linked (GlcNAc...) asparagine; by host) is linked at N305. Residues 359–379 (VAYFGMAGNWLKVLAVLFLFA) traverse the membrane as a helical segment. Residues 380–729 (GVEAQTMIAH…WEYIVLMFLV (350 aa)) lie on the Lumenal side of the membrane. Residues 385 to 411 (TMIAHGVSQTTSGFASLLTPGAKQNIQ) are HVR1. N-linked (GlcNAc...) (high mannose) asparagine; by host glycans are attached at residues N416, N422, and N429. Disulfide bonds link C428–C552, C451–C458, C486–C494, and C503–C508. N447 is a glycosylation site (N-linked (GlcNAc...) asparagine; by host). The HVR2 stretch occupies residues 474–478 (KNVSG). Residue N475 is glycosylated (N-linked (GlcNAc...) asparagine; by host). The interval 480-493 (SDDRPYCWHYAPRP) is CD81-binding 1. The N-linked (GlcNAc...) asparagine; by host glycan is linked to N532. Residues 544 to 551 (PPTGGWFG) are CD81-binding 2. The N-linked (GlcNAc...) asparagine; by host glycan is linked to N556. C564 and C569 are oxidised to a cystine. N577 carries N-linked (GlcNAc...) asparagine; by host glycosylation. Intrachain disulfides connect C585–C589, C601–C624, and C611–C648. 2 N-linked (GlcNAc...) (high mannose) asparagine; by host glycosylation sites follow: N627 and N649. A disulfide bridge links C656 with C681. A PKR/eIF2-alpha phosphorylation homology domain (PePHD) region spans residues 664-675 (IEMSPLLFSTTQ). The helical transmembrane segment at 730 to 750 (LADARICTCLWLMLLISTVEA) threads the bilayer. Over 751–761 (AVERLVVLNAA) the chain is Lumenal. Residues 762–782 (SAAGTAGWWWAVLFLCCVWYV) traverse the membrane as a helical segment. Over 783-786 (KGRL) the chain is Cytoplasmic. The chain crosses the membrane as a helical span at residues 787–807 (VPACTYMALGMWPLLLTILAL). Over 808–817 (PPRAYAMDNE) the chain is Lumenal. A helical membrane pass occupies residues 818 to 838 (QAASLGAVGLLVITIFSITPM). Over 839–885 (YKKLLNCFIWWNQYFLARAEAMVHEWVPDLRVRGGRDSIILLTCLLH) the chain is Cytoplasmic. A helical membrane pass occupies residues 886 to 906 (PQLGFEVTKILLAVLAPLYIL). Over 907-932 (QYSLLKVPYFVRAHILLRACLLVRRL) the chain is Lumenal. The Peptidase C18 domain occupies 907 to 1030 (QYSLLKVPYF…DMQRGGWKLL (124 aa)). Residues 908–1210 (YSLLKVPYFV…PVENMETTMR (303 aa)) form a protease NS2-3 region. C926 is lipidated: S-palmitoyl cysteine; by host. The helical transmembrane segment at 933–953 (AGGKYVQACLLRLGAWTGTFV) threads the bilayer. The interaction with host SCPS1 stretch occupies residues 933-953 (AGGKYVQACLLRLGAWTGTFV). Residues 954–1661 (YDHLAPLSDW…CMSADLEVIT (708 aa)) are Cytoplasmic-facing. Residues H956, E976, and C997 each act as for protease NS2 activity; shared with dimeric partner in the active site. Residues 1031-1212 (APITAYAQQT…ENMETTMRSP (182 aa)) form the Peptidase S29 domain. Residues H1087 and D1111 each act as charge relay system; for serine protease NS3 activity in the active site. Zn(2+) contacts are provided by C1127 and C1129. The active-site Charge relay system; for serine protease NS3 activity is S1169. Residues C1175 and H1179 each contribute to the Zn(2+) site. ATP is bound at residue 1234 to 1241 (APTGSGKS). 2 residues coordinate Mg(2+): S1241 and E1321. Positions 1320–1323 (DECH) match the DECH box motif. The interval 1490 to 1502 (QRRGRTGRGKPGV) is RNA-binding. A helical transmembrane segment spans residues 1662-1682 (STWVLVGGVLAALAAYCLSVG). Positions 1683–1694 (CVVICGRITLTG) are NS3-binding. At 1683-1809 (CVVICGRITL…SLTSPLRTSQ (127 aa)) the chain is on the cytoplasmic side. The chain crosses the membrane as a helical span at residues 1810–1830 (TLLLNILGGWIAAQVAPPPAS). Topologically, residues 1831–1832 (TA) are lumenal. The helical transmembrane segment at 1833-1853 (FVVSGLAGAAVGSIRLGRVLV) threads the bilayer. Position 1854 (D1854) is a topological domain, cytoplasmic. A helical transmembrane segment spans residues 1855-1875 (VLAGYGAGVSGALVAFKIMSG). Residues 1876-1885 (ECPSTEDMVN) lie on the Lumenal side of the membrane. Residues 1886–1906 (LLPALLSPGVALVGVVCAAIL) traverse the membrane as a helical segment. Over 1907 to 1976 (RRHVGPAEGA…WVNEDTATPC (70 aa)) the chain is Cytoplasmic. The S-palmitoyl cysteine; by host moiety is linked to residue C1976. The stretch at 1977–2006 (ATSWLRDVWDWVCTVLSDFKVWLQAKLFPR) is an intramembrane region. At 2007 to 2997 (LPGIPFLSCQ…YHSVSQARPR (991 aa)) the chain is on the cytoplasmic side. Positions 2015, 2033, 2035, and 2056 each coordinate Zn(2+). Residues 2124 to 2212 (EFFTEVDGVR…ASSSANQLSA (89 aa)) form an FKBP8-binding region. Residues 2124–2337 (EFFTEVDGVR…PVPPPRRKRL (214 aa)) form a transcriptional activation region. An interaction with non-structural protein 4A region spans residues 2139 to 2143 (PPCKP). The interval 2192–2215 (RRLKKGSPPSLASSSANQLSAPSL) is disordered. The tract at residues 2193–2445 (RLKKGSPPSL…ALITPCAAEE (253 aa)) is interaction with host SKP2. Phosphoserine; by host occurs at positions 2198, 2201, 2205, 2211, and 2214. Positions 2198 to 2215 (SPPSLASSSANQLSAPSL) are enriched in low complexity. The interval 2214 to 2253 (SLRATCTTSQKHPEMELLQANLLWKHEMGSHIPRVQSENK) is ISDR. Positions 2214–2279 (SLRATCTTSQ…REISVSVECH (66 aa)) are interaction with EIF2AK2/PKR. Residues 2253–2311 (KVVVLDSFELYPLEYEEREISVSVECHRQPRCKFPPVFPVWARPDNNPPFIQAWQMPGY) are NS4B-binding. The segment at 2304-2382 (QAWQMPGYEP…SITSPVPPDP (79 aa)) is V3. The SH3-binding signature appears at 2327–2330 (APVP). The Nuclear localization signal motif lies at 2332 to 2340 (PRRKRLVHL). A Glycyl lysine isopeptide (Lys-Gly) (interchain with G-Cter in ubiquitin) cross-link involves residue K2355. Positions 2359 to 2417 (ESSNDPGPSSDSGLSITSPVPPDPTTPEDAGSEAESYSSMPPLEGEPGDPDLSSGSWST) are disordered. Residues 2360–2373 (SSNDPGPSSDSGLS) are compositionally biased toward low complexity. 2 positions are modified to phosphoserine; by host: S2456 and S2469. A RdRp catalytic domain is found at 2641-2759 (PMGFSYDTRC…ICESAGVQED (119 aa)). Positions 2647, 2745, and 2746 each coordinate Mg(2+). The helical transmembrane segment at 2998–3018 (FLLLGLLLLTVGVGIFLLPAR) threads the bilayer.

The protein belongs to the hepacivirus polyprotein family. As to quaternary structure, homooligomer. Interacts with E1 (via C-terminus). Interacts with the non-structural protein 5A. Interacts (via N-terminus) with host STAT1 (via SH2 domain); this interaction results in decreased STAT1 phosphorylation and ubiquitin-mediated proteasome-dependent STAT1 degradation, leading to decreased IFN-stimulated gene transcription. Interacts with host STAT3; this interaction constitutively activates STAT3. Interacts with host LTBR receptor. Interacts with host TNFRSF1A receptor and possibly induces apoptosis. Interacts with host HNRPK. Interacts with host YWHAE. Interacts with host UBE3A/E6AP. Interacts with host DDX3X. Interacts with host APOA2. Interacts with host RXRA protein. Interacts with host SP110 isoform 3/Sp110b; this interaction sequesters the transcriptional corepressor SP110 away from the nucleus. Interacts with host CREB3 nuclear transcription protein; this interaction triggers cell transformation. Interacts with host ACY3. Interacts with host C1QR1. Interacts with host RBM24; this interaction, which enhances the interaction of the mature core protein with 5'-UTR, may inhibit viral translation and favor replication. Interacts with host EIF2AK2/PKR; this interaction induces the autophosphorylation of EIF2AK2. Part of the viral assembly initiation complex composed of NS2, E1, E2, NS3, NS4A, NS5A and the mature core protein. Forms a heterodimer with envelope glycoprotein E2. Interacts with mature core protein. Interacts with protease NS2. The heterodimer E1/E2 interacts with host CLDN1; this interaction plays a role in viral entry into host cell. Interacts with host SPSB2 (via C-terminus). Part of the viral assembly initiation complex composed of NS2, E1, E2, NS3, NS4A, NS5A and the mature core protein. Interacts with host NEURL3; this interaction prevents E1 binding to glycoprotein E2. In terms of assembly, forms a heterodimer with envelope glycoprotein E1. Interacts with host CD81 and SCARB1 receptors; these interactions play a role in viral entry into host cell. Interacts with host EIF2AK2/PKR; this interaction inhibits EIF2AK2 and probably allows the virus to evade the innate immune response. Interacts with host CD209/DC-SIGN and CLEC4M/DC-SIGNR. Interact with host SPCS1; this interaction is essential for viral particle assembly. Interacts with protease NS2. The heterodimer E1/E2 interacts with host CLDN1; this interaction plays a role in viral entry into host cell. Part of the viral assembly initiation complex composed of NS2, E1, E2, NS3, NS4A, NS5A and the mature core protein. Interacts with host SLC3A2/4F2hc; the interaction may facilitate viral entry into host cell. Interacts with human PLSCR1. As to quaternary structure, homohexamer. Homoheptamer. Interacts with protease NS2. Homodimer. Interacts with host SPCS1; this interaction is essential for viral particle assembly. Interacts with envelope glycoprotein E1. Interacts with envelope glycoprotein E2. Interacts with viroporin p7. Interacts with serine protease/helicase NS3. Part of the replication complex composed of NS2, NS3, NS4A, NS4B, NS5A and the RNA-directed RNA polymerase embedded in an ER-derived membranous web. Part of the viral assembly initiation complex composed of NS2, E1, E2, NS3, NS4A, NS5A and the mature core protein. In terms of assembly, interacts with protease NS2. Interacts with non-structural protein 4A; this interaction stabilizes the folding of NS3 serine protease. NS3-NS4A interaction is essential for NS3 activation and allows membrane anchorage of the latter. NS3/NS4A complex also prevents phosphorylation of host IRF3, thus preventing the establishment of dsRNA induced antiviral state. Interacts with host MAVS; this interaction leads to the cleavage and inhibition of host MAVS. Interacts with host TICAM1; this interaction leads to the cleavage and inhibition of host TICAM1. Interacts with host TANK-binding kinase/TBK1; this interaction results in the inhibition of the association between TBK1 and IRF3, which leads to the inhibition of IRF3 activation. Interacts with host RBM24. Part of the replication complex composed of NS2, NS3, NS4A, NS4B, NS5A and the RNA-directed RNA polymerase embedded in an ER-derived membranous web. Part of the viral assembly initiation complex composed of NS2, E1, E2, NS3, NS4A, NS5A and the mature core protein. As to quaternary structure, interacts with NS3 serine protease; this interaction stabilizes the folding of NS3 serine protease. NS3-NS4A interaction is essential for NS3 activation and allows membrane anchorage of the latter. Interacts with non-structural protein 5A (via N-terminus). Part of the replication complex composed of NS2, NS3, NS4A, NS4B, NS5A and the RNA-directed RNA polymerase embedded in an ER-derived membranous web. Part of the viral assembly initiation complex composed of NS2, E1, E2, NS3, NS4A, NS5A and the mature core protein. Homomultimer. Interacts with non-structural protein NS5A. Interacts with host PLA2G4C; this interaction likely initiates the recruitment of replication complexes to lipid droplets. Interacts with host STING; this interaction disrupts the interaction between STING and TBK1 thereby suppressing the interferon signaling. Part of the replication complex composed of NS2, NS3, NS4A, NS4B, NS5A and the RNA-directed RNA polymerase embedded in an ER-derived membranous web. In terms of assembly, monomer. Homodimer; dimerization is required for RNA-binding. Interacts with the mature core protein. Interacts (via N-terminus) with non-structural protein 4A. Interacts with non-structural protein 4B. Interacts (via region D2) with RNA-directed RNA polymerase. Part of the viral assembly initiation complex composed of NS2, E1, E2, NS3, NS4A, NS5A and the mature core protein. Part of the replication complex composed of NS2, NS3, NS4A, NS4B, NS5A and the RNA-directed RNA polymerase embedded in an ER-derived membranous web. Interacts with host GRB2. Interacts with host BIN1. Interacts with host PIK3R1. Interacts with host SRCAP. Interacts with host FKBP8. Interacts (via C-terminus) with host VAPB (via MSP domain). Interacts with host EIF2AK2/PKR; this interaction leads to disruption of EIF2AK2 dimerization by NS5A and probably allows the virus to evade the innate immune response. Interacts (via N-terminus) with host PACSIN2 (via N-terminus); this interaction attenuates protein kinase C alpha-mediated phosphorylation of PACSIN2 by disrupting the interaction between PACSIN2 and PRKCA. Interacts (via N-terminus) with host SRC kinase (via SH2 domain). Interacts with most Src-family kinases. Interacts with host IFI27 and SKP2; promotes the ubiquitin-mediated proteasomal degradation of NS5A. Interacts with host GPS2. Interacts with host TNFRSF21; this interaction allows the modulation by the virus of JNK, p38 MAPK, STAT3, and Akt signaling pathways in a DR6-dependent manner. Interacts (via N-terminus) with host CIDEB (via N-terminus); this interaction seems to regulate the association of HCV particles with APOE. Interacts with host CHKA/Choline Kinase-alpha; CHKA bridges host PI4KA and NS5A and potentiates NS5A-stimulated PI4KA activity, which then facilitates the targeting of the ternary complex to the ER for viral replication. Interacts with host SPSB2 (via C-terminus); this interaction targets NS5A for ubiquitination and degradation. Interacts with host RAB18; this interaction may promote the association of NS5A and other replicase components with lipid droplets. Interacts (via region D2) with host PPIA/CYPA; the interaction stimulates RNA-binding ability of NS5A and is dependent on the peptidyl-prolyl cis-trans isomerase activity of PPIA/CYPA. Interacts with host TRIM14; this interaction induces the degradation of NS5A. As to quaternary structure, homooligomer. Interacts with non-structural protein 5A. Interacts with host VAPB. Interacts with host PRK2/PKN2. Interacts with host HNRNPA1 and SEPT6; these interactions facilitate viral replication. Part of the replication complex composed of NS2, NS3, NS4A, NS4B, NS5A and the RNA-directed RNA polymerase. Zn(2+) is required as a cofactor. Requires Mg(2+) as cofactor. In terms of processing, specific enzymatic cleavages in vivo yield mature proteins. The structural proteins, core, E1, E2 and p7 are produced by proteolytic processing by host signal peptidases. The core protein precursor is synthesized as a 23 kDa, which is retained in the ER membrane through the hydrophobic signal peptide. Cleavage by the signal peptidase releases the 21 kDa mature core protein. The cleavage of the core protein precursor occurs between aminoacids 176 and 188 but the exact cleavage site is not known. Some degraded forms of the core protein appear as well during the course of infection. The other proteins (p7, NS2, NS3, NS4A, NS4B, NS5A and NS5B) are cleaved by the viral proteases. Autoprocessing between NS2 and NS3 is mediated by the NS2 cysteine protease catalytic domain and regulated by the NS3 N-terminal domain. Post-translationally, phosphorylated by host PKC and PKA. Ubiquitinated; mediated by UBE3A and leading to core protein subsequent proteasomal degradation. In terms of processing, highly N-glycosylated. Post-translationally, palmitoylation is required for NS2/3 autoprocessing and E2 recruitment to membranes. Palmitoylated. This modification may play a role in its polymerization or in protein-protein interactions. In terms of processing, phosphorylated on serines in a basal form termed p56. p58 is a hyperphosphorylated form of p56. p56 and p58 coexist in the cell in roughly equivalent amounts. Hyperphosphorylation is dependent on the presence of NS4A. Host CSNK1A1/CKI-alpha or RPS6KB1 kinases may be responsible for NS5A phosphorylation. Post-translationally, tyrosine phosphorylation is essential for the interaction with host SRC. The N-terminus is phosphorylated by host PRK2/PKN2.

It is found in the host endoplasmic reticulum membrane. It localises to the host mitochondrion membrane. Its subcellular location is the virion. The protein localises to the host cytoplasm. The protein resides in the host nucleus. It is found in the host lipid droplet. It localises to the virion membrane. Its subcellular location is the host mitochondrion. The protein localises to the host cell membrane. The protein resides in the host perinuclear region. It carries out the reaction Hydrolysis of four peptide bonds in the viral precursor polyprotein, commonly with Asp or Glu in the P6 position, Cys or Thr in P1 and Ser or Ala in P1'.. The catalysed reaction is a ribonucleoside 5'-triphosphate + H2O = a ribonucleoside 5'-diphosphate + phosphate + H(+). The enzyme catalyses ATP + H2O = ADP + phosphate + H(+). It catalyses the reaction RNA(n) + a ribonucleoside 5'-triphosphate = RNA(n+1) + diphosphate. With respect to regulation, inhibited by the antiviral drug hexamethylene amiloride. Inhibition by amantadine appears to be genotype-dependent. Also inhibited by long-alkyl-chain iminosugar derivatives. Its activity is regulated as follows. Activity is up-regulated by PRK2/PKN2-mediated phosphorylation. Packages viral RNA to form a viral nucleocapsid, and promotes virion budding. Participates in the viral particle production as a result of its interaction with the non-structural protein 5A. Binds RNA and may function as a RNA chaperone to induce the RNA structural rearrangements taking place during virus replication. Modulates viral translation initiation by interacting with viral IRES and 40S ribosomal subunit. Affects various cell signaling pathways, host immunity and lipid metabolism. Prevents the establishment of cellular antiviral state by blocking the interferon-alpha/beta (IFN-alpha/beta) and IFN-gamma signaling pathways and by blocking the formation of phosphorylated STAT1 and promoting ubiquitin-mediated proteasome-dependent degradation of STAT1. Activates STAT3 leading to cellular transformation. Regulates the activity of cellular genes, including c-myc and c-fos. May repress the promoter of p53, and sequester CREB3 and SP110 isoform 3/Sp110b in the cytoplasm. Represses cell cycle negative regulating factor CDKN1A, thereby interrupting an important check point of normal cell cycle regulation. Targets transcription factors involved in the regulation of inflammatory responses and in the immune response: suppresses TNF-induced NF-kappa-B activation, and activates AP-1. Binds to dendritic cells (DCs) via C1QR1, resulting in down-regulation of T-lymphocytes proliferation. Alters lipid metabolism by interacting with hepatocellular proteins involved in lipid accumulation and storage. Induces up-regulation of FAS promoter activity, and thereby contributes to the increased triglyceride accumulation in hepatocytes (steatosis). In terms of biological role, forms a heterodimer with envelope glycoprotein E2, which mediates virus attachment to the host cell, virion internalization through clathrin-dependent endocytosis and fusion with host membrane. Fusion with the host cell is most likely mediated by both E1 and E2, through conformational rearrangements of the heterodimer required for fusion rather than a classical class II fusion mechanism. E1/E2 heterodimer binds host apolipoproteins such as APOB and ApoE thereby forming a lipo-viro-particle (LVP). APOE associated to the LVP allows the initial virus attachment to cell surface receptors such as the heparan sulfate proteoglycans (HSPGs), syndecan-1 (SDC1), syndecan-1 (SDC2), the low-density lipoprotein receptor (LDLR) and scavenger receptor class B type I (SCARB1). The cholesterol transfer activity of SCARB1 allows E2 exposure and binding of E2 to SCARB1 and the tetraspanin CD81. E1/E2 heterodimer binding on CD81 activates the epithelial growth factor receptor (EGFR) signaling pathway. Diffusion of the complex E1-E2-EGFR-SCARB1-CD81 to the cell lateral membrane allows further interaction with Claudin 1 (CLDN1) and occludin (OCLN) to finally trigger HCV entry. Functionally, forms a heterodimer with envelope glycoprotein E1, which mediates virus attachment to the host cell, virion internalization through clathrin-dependent endocytosis and fusion with host membrane. Fusion with the host cell is most likely mediated by both E1 and E2, through conformational rearrangements of the heterodimer required for fusion rather than a classical class II fusion mechanism. The interaction between envelope glycoprotein E2 and host apolipoprotein E/APOE allows the proper assembly, maturation and infectivity of the viral particles. This interaction is probably promoted via the up-regulation of cellular autophagy by the virus. E1/E2 heterodimer binds host apolipoproteins such as APOB and APOE thereby forming a lipo-viro-particle (LVP). APOE associated to the LVP allows the initial virus attachment to cell surface receptors such as the heparan sulfate proteoglycans (HSPGs), syndecan-1 (SDC1), syndecan-1 (SDC2), the low-density lipoprotein receptor (LDLR) and scavenger receptor class B type I (SCARB1). The cholesterol transfer activity of SCARB1 allows E2 exposure and binding of E2 to SCARB1 and the tetraspanin CD81. E1/E2 heterodimer binding on CD81 activates the epithelial growth factor receptor (EGFR) signaling pathway. Diffusion of the complex E1-E2-EGFR-SCARB1-CD81 to the cell lateral membrane allows further interaction with Claudin 1 (CLDN1) and occludin (OCLN) to finally trigger HCV entry. Inhibits host EIF2AK2/PKR activation, preventing the establishment of an antiviral state. Viral ligand for CD209/DC-SIGN and CLEC4M/DC-SIGNR, which are respectively found on dendritic cells (DCs), and on liver sinusoidal endothelial cells and macrophage-like cells of lymph node sinuses. These interactions allow the capture of circulating HCV particles by these cells and subsequent facilitated transmission to permissive cells such as hepatocytes and lymphocyte subpopulations. The interaction between E2 and host amino acid transporter complex formed by SLC3A2 and SLC7A5/LAT1 may facilitate viral entry into host cell. Its function is as follows. Ion channel protein that acts as a viroporin and plays an essential role in the assembly, envelopment and secretion of viral particles. Regulates the host cell secretory pathway, which induces the intracellular retention of viral glycoproteins and favors assembly of viral particles. Creates a pore in acidic organelles and releases Ca(2+) and H(+) in the cytoplasm of infected cells, leading to a productive viral infection. High levels of cytoplasmic Ca(2+) may trigger membrane trafficking and transport of viral ER-associated proteins to viroplasms, sites of viral genome replication. This ionic imbalance induces the assembly of the inflammasome complex, which triggers the maturation of pro-IL-1beta into IL-1beta through the action of caspase-1. Targets also host mitochondria and induces mitochondrial depolarization. In addition of its role as a viroporin, acts as a lipid raft adhesion factor. Cysteine protease required for the proteolytic auto-cleavage between the non-structural proteins NS2 and NS3. The N-terminus of NS3 is required for the function of NS2 protease (active region NS2-3). Promotes the initiation of viral particle assembly by mediating the interaction between structural and non-structural proteins. In terms of biological role, displays three enzymatic activities: serine protease with a chymotrypsin-like fold, NTPase and RNA helicase. NS3 serine protease, in association with NS4A, is responsible for the cleavages of NS3-NS4A, NS4A-NS4B, NS4B-NS5A and NS5A-NS5B. The NS3/NS4A complex prevents phosphorylation of host IRF3, thus preventing the establishment of dsRNA induced antiviral state. The NS3/NS4A complex induces host amino acid transporter component SLC3A2, thus contributing to HCV propagation. NS3 RNA helicase binds to RNA and unwinds both dsDNA and dsRNA in the 3' to 5' direction, and likely resolves RNA complicated stable secondary structures in the template strand. Binds a single ATP and catalyzes the unzipping of a single base pair of dsRNA. Inhibits host antiviral proteins TBK1 and IRF3 thereby preventing the establishment of an antiviral state. Cleaves host MAVS/CARDIF thereby preventing the establishment of an antiviral state. Cleaves host TICAM1/TRIF, thereby disrupting TLR3 signaling and preventing the establishment of an antiviral state. Functionally, induces a specific membrane alteration that serves as a scaffold for the virus replication complex. This membrane alteration gives rise to the so-called ER-derived membranous web that contains the replication complex. NS4B self-interaction contributes to its function in membranous web formation. Promotes host TRIF protein degradation in a CASP8-dependent manner thereby inhibiting host TLR3-mediated interferon signaling. Disrupts the interaction between STING and TBK1 contributing to the inhibition of interferon signaling. Its function is as follows. Phosphorylated protein that is indispensable for viral replication and assembly. Both hypo- and hyperphosphorylated states are required for the viral life cycle. The hyperphosphorylated form of NS5A is an inhibitor of viral replication. Involved in RNA-binding and especially in binding to the viral genome. Zinc is essential for RNA-binding. Participates in the viral particle production as a result of its interaction with the mature viral core protein. Its interaction with host VAPB may target the viral replication complex to vesicles. Down-regulates viral IRES translation initiation. Mediates interferon resistance, presumably by interacting with and inhibiting host EIF2AK2/PKR. Prevents BIN1-induced apoptosis. Acts as a transcriptional activator of some host genes important for viral replication when localized in the nucleus. Via the interaction with host PACSIN2, modulates lipid droplet formation in order to promote virion assembly. Modulates TNFRSF21/DR6 signaling pathway for viral propagation. RNA-dependent RNA polymerase that performs primer-template recognition and RNA synthesis during viral replication. Initiates RNA transcription/replication at a flavin adenine dinucleotide (FAD), resulting in a 5'- FAD cap on viral RNAs. In this way, recognition of viral 5' RNA by host pattern recognition receptors can be bypassed, thereby evading activation of antiviral pathways. This is Genome polyprotein from Hepatitis C virus genotype 6a (isolate EUHK2) (HCV).